Consider the following 1491-residue polypeptide: Terminal uridylyltransferase 7 (1491 aa).

Threonine 64 carries the post-translational modification Phosphothreonine. 2 positions are modified to phosphoserine: serine 132 and serine 172. A disordered region spans residues 165-203; sequence MSEMEAGSPENKKQRSRPRKPRRTRTEDSEQDGDLDGPV. Positions 178–187 are enriched in basic residues; the sequence is QRSRPRKPRR. The segment at 244–274 adopts a Matrin-type zinc-finger fold; sequence YTCKLCDALIDSIPFAHKHIKEKRHKKNLKE. The 50-residue stretch at 551–600 folds into the PAP-associated 1 domain; it reads VGQLWVELLRFYALEFNLADLVISIRVKELISRESKDWPKKRIAIEDPYS. Residues serine 600 and serine 747 each carry the phosphoserine modification. Disordered stretches follow at residues 740–774 and 834–911; these read AELP…KHPE and QSRT…CGEN. Over residues 844-857 the composition is skewed to acidic residues; the sequence is DDEEEEEEEEEEEE. Threonine 865 is modified (phosphothreonine). Over residues 885–897 the composition is skewed to acidic residues; the sequence is GEEDALSEEDDLA. Serine 891 bears the Phosphoserine mark. Residues 947-1491 are sufficient for monouridylation activity; the sequence is RKLTFTKGKS…ASVKRTQQES (545 aa). Residues 959 to 976 form a CCHC-type 1 zinc finger; sequence VVCSLCKREGHLKKDCPE. Residues 1043 to 1046, 1053 to 1056, asparagine 1126, lysine 1148, 1166 to 1170, and histidine 1282 contribute to the UTP site; these read SSKN, SDLD, and SYAYT. 2 residues coordinate Mg(2+): aspartate 1054 and aspartate 1056. The region spanning 1230–1282 is the PAP-associated 2 domain; that stretch reads VGQLWLGLLRFYTEEFDFKEHVISIRRKSLLTTFKKQWTSKYIVIEDPFDLNH. The CCHC-type 2 zinc finger occupies 1341–1358; sequence RCCRICGKIGHFMKDCPM. 2 disordered regions span residues 1362–1399 and 1463–1491; these read VRRR…EKEV and PQFK…QQES. A compositionally biased stretch (basic and acidic residues) spans 1377–1399; the sequence is SESKEKRSKEDKEIQNKYTEKEV. A CCHC-type 3 zinc finger spans residues 1447 to 1464; sequence KRCFICGREGHIKKECPQ. A compositionally biased stretch (polar residues) spans 1470-1481; that stretch reads GSLSSKYMTQGR.

The protein belongs to the DNA polymerase type-B-like family. It depends on Mg(2+) as a cofactor. Mn(2+) is required as a cofactor.

It localises to the cytoplasm. It carries out the reaction RNA(n) + UTP = RNA(n)-3'-uridine ribonucleotide + diphosphate. Uridylyltransferase that mediates the terminal uridylation of mRNAs with short (less than 25 nucleotides) poly(A) tails, hence facilitating global mRNA decay. Essential for both oocyte maturation and fertility. Through 3' terminal uridylation of mRNA, sculpts, with TUT7, the maternal transcriptome by eliminating transcripts during oocyte growth. Involved in microRNA (miRNA)-induced gene silencing through uridylation of deadenylated miRNA targets. Also acts as a suppressor of miRNA biogenesis by mediating the terminal uridylation of miRNA precursors, including that of let-7 (pre-let-7). Uridylated pre-let-7 RNA is not processed by Dicer and undergo degradation. Pre-let-7 uridylation is strongly enhanced in the presence of LIN28A. Due to functional redundancy between ZCCHC6 and ZCCHC11, the identification of the specific role of each of these proteins is difficult. Involved in microRNA (miRNA)-induced gene silencing through uridylation of deadenylated miRNA targets. Also functions as an integral regulator of microRNA biogenesiS using 3 different uridylation mechanisms. Acts as a suppressor of miRNA biogenesis by mediating the terminal uridylation of some miRNA precursors, including that of let-7 (pre-let-7). Uridylated pre-let-7 RNA is not processed by Dicer and undergo degradation. Pre-let-7 oligouridylation is strongly enhanced in the presence of LIN28A. In the absence of LIN28A, TUT7 and TUT4 monouridylate group II pre-miRNAs, which includes most of pre-let7 members, that shapes an optimal 3' end overhang for efficient processing. Add oligo-U tails to truncated pre-miRNAS with a 5' overhang which may promote rapid degradation of non-functional pre-miRNA species. Does not play a role in replication-dependent histone mRNA degradation. Due to functional redundancy between TUT4 and TUT7, the identification of the specific role of each of these proteins is difficult. TUT4 and TUT7 restrict retrotransposition of long interspersed element-1 (LINE-1) in cooperation with MOV10 counteracting the RNA chaperonne activity of L1RE1. TUT7 uridylates LINE-1 mRNAs in the cytoplasm which inhibits initiation of reverse transcription once in the nucleus, whereas uridylation by TUT4 destabilizes mRNAs in cytoplasmic ribonucleoprotein granules. The polypeptide is Terminal uridylyltransferase 7 (Mus musculus (Mouse)).